Consider the following 512-residue polypeptide: Lysine--tRNA ligase (512 aa).

Mg(2+) is bound by residues Glu408 and Glu415.

Belongs to the class-II aminoacyl-tRNA synthetase family. As to quaternary structure, homodimer. Mg(2+) serves as cofactor.

The protein resides in the cytoplasm. It catalyses the reaction tRNA(Lys) + L-lysine + ATP = L-lysyl-tRNA(Lys) + AMP + diphosphate. This chain is Lysine--tRNA ligase, found in Prochlorococcus marinus (strain MIT 9215).